The sequence spans 506 residues: Maturase K (506 aa).

Belongs to the intron maturase 2 family. MatK subfamily.

It is found in the plastid. Its subcellular location is the chloroplast. In terms of biological role, usually encoded in the trnK tRNA gene intron. Probably assists in splicing its own and other chloroplast group II introns. The chain is Maturase K from Trifolium beckwithii (Beckwith's clover).